The chain runs to 247 residues: Protein GrpE (247 aa).

Disordered stretches follow at residues 1-68 (MKKN…KNDD) and 226-247 (PAEK…KNEN). 3 stretches are compositionally biased toward basic and acidic residues: residues 7–35 (KHAD…KDEQ), 43–54 (TSKENPQEDKAE), and 228–247 (EKQD…KNEN).

Belongs to the GrpE family. As to quaternary structure, homodimer.

The protein resides in the cytoplasm. In terms of biological role, participates actively in the response to hyperosmotic and heat shock by preventing the aggregation of stress-denatured proteins, in association with DnaK and GrpE. It is the nucleotide exchange factor for DnaK and may function as a thermosensor. Unfolded proteins bind initially to DnaJ; upon interaction with the DnaJ-bound protein, DnaK hydrolyzes its bound ATP, resulting in the formation of a stable complex. GrpE releases ADP from DnaK; ATP binding to DnaK triggers the release of the substrate protein, thus completing the reaction cycle. Several rounds of ATP-dependent interactions between DnaJ, DnaK and GrpE are required for fully efficient folding. The polypeptide is Protein GrpE (Treponema denticola (strain ATCC 35405 / DSM 14222 / CIP 103919 / JCM 8153 / KCTC 15104)).